Here is a 406-residue protein sequence, read N- to C-terminus: Phosphopentomutase (406 aa).

6 residues coordinate Mn(2+): aspartate 10, aspartate 305, histidine 310, aspartate 346, histidine 347, and histidine 358.

The protein belongs to the phosphopentomutase family. Requires Mn(2+) as cofactor.

It localises to the cytoplasm. The enzyme catalyses 2-deoxy-alpha-D-ribose 1-phosphate = 2-deoxy-D-ribose 5-phosphate. It catalyses the reaction alpha-D-ribose 1-phosphate = D-ribose 5-phosphate. Its pathway is carbohydrate degradation; 2-deoxy-D-ribose 1-phosphate degradation; D-glyceraldehyde 3-phosphate and acetaldehyde from 2-deoxy-alpha-D-ribose 1-phosphate: step 1/2. Functionally, isomerase that catalyzes the conversion of deoxy-ribose 1-phosphate (dRib-1-P) and ribose 1-phosphate (Rib-1-P) to deoxy-ribose 5-phosphate (dRib-5-P) and ribose 5-phosphate (Rib-5-P), respectively. In Vibrio campbellii (strain ATCC BAA-1116), this protein is Phosphopentomutase.